Consider the following 254-residue polypeptide: Flavin-dependent thymidylate synthase (254 aa).

The 231-residue stretch at 7–237 (LRVQLIAKTE…PAVFADFEIT (231 aa)) folds into the ThyX domain. DUMP contacts are provided by residues 92–95 (ELIR), 103–107 (QLSQR), and His-176. FAD-binding positions include 95–97 (RHR) and Gln-103. The ThyX motif motif lies at 95-105 (RHRHFSYSQLS). FAD contacts are provided by residues 192 to 194 (NYR) and His-198. Arg-203 provides a ligand contact to dUMP. The active-site Involved in ionization of N3 of dUMP, leading to its activation is Arg-203.

The protein belongs to the thymidylate synthase ThyX family. In terms of assembly, homotetramer. Requires FAD as cofactor.

It catalyses the reaction dUMP + (6R)-5,10-methylene-5,6,7,8-tetrahydrofolate + NADPH + H(+) = dTMP + (6S)-5,6,7,8-tetrahydrofolate + NADP(+). Its pathway is pyrimidine metabolism; dTTP biosynthesis. Catalyzes the reductive methylation of 2'-deoxyuridine-5'-monophosphate (dUMP) to 2'-deoxythymidine-5'-monophosphate (dTMP) while utilizing 5,10-methylenetetrahydrofolate (mTHF) as the methyl donor, and NADPH and FADH(2) as the reductant. The protein is Flavin-dependent thymidylate synthase of Mycobacterium leprae (strain Br4923).